Consider the following 306-residue polypeptide: Porphobilinogen deaminase (306 aa).

Cys-239 carries the post-translational modification S-(dipyrrolylmethanemethyl)cysteine.

This sequence belongs to the HMBS family. In terms of assembly, monomer. It depends on dipyrromethane as a cofactor.

The catalysed reaction is 4 porphobilinogen + H2O = hydroxymethylbilane + 4 NH4(+). Its pathway is porphyrin-containing compound metabolism; protoporphyrin-IX biosynthesis; coproporphyrinogen-III from 5-aminolevulinate: step 2/4. Tetrapolymerization of the monopyrrole PBG into the hydroxymethylbilane pre-uroporphyrinogen in several discrete steps. The chain is Porphobilinogen deaminase from Helicobacter acinonychis (strain Sheeba).